We begin with the raw amino-acid sequence, 136 residues long: MANFKVVVSDPKEGRAYQIDIKDAEANALIGKAIGDVVDGAIFGLAGYKVQITGGCDGSGFVMKPDLPGPRRQRILTATGVGYVPKLPGQRRRKMMRGKEIAPDIIQVNAKIVEYGSKSIKALLGLETAEEAPAAE.

The protein belongs to the eukaryotic ribosomal protein eS6 family.

This Methanosarcina acetivorans (strain ATCC 35395 / DSM 2834 / JCM 12185 / C2A) protein is Small ribosomal subunit protein eS6.